The chain runs to 225 residues: NAD(P)H-quinone oxidoreductase subunit K, chloroplastic (225 aa).

[4Fe-4S] cluster contacts are provided by Cys-43, Cys-44, Cys-108, and Cys-139.

It belongs to the complex I 20 kDa subunit family. In terms of assembly, NDH is composed of at least 16 different subunits, 5 of which are encoded in the nucleus. It depends on [4Fe-4S] cluster as a cofactor.

It is found in the plastid. It localises to the chloroplast thylakoid membrane. It catalyses the reaction a plastoquinone + NADH + (n+1) H(+)(in) = a plastoquinol + NAD(+) + n H(+)(out). The enzyme catalyses a plastoquinone + NADPH + (n+1) H(+)(in) = a plastoquinol + NADP(+) + n H(+)(out). NDH shuttles electrons from NAD(P)H:plastoquinone, via FMN and iron-sulfur (Fe-S) centers, to quinones in the photosynthetic chain and possibly in a chloroplast respiratory chain. The immediate electron acceptor for the enzyme in this species is believed to be plastoquinone. Couples the redox reaction to proton translocation, and thus conserves the redox energy in a proton gradient. The sequence is that of NAD(P)H-quinone oxidoreductase subunit K, chloroplastic from Eucalyptus globulus subsp. globulus (Tasmanian blue gum).